Here is a 122-residue protein sequence, read N- to C-terminus: Ribosome-binding factor A (122 aa).

Belongs to the RbfA family. In terms of assembly, monomer. Binds 30S ribosomal subunits, but not 50S ribosomal subunits or 70S ribosomes.

Its subcellular location is the cytoplasm. One of several proteins that assist in the late maturation steps of the functional core of the 30S ribosomal subunit. Associates with free 30S ribosomal subunits (but not with 30S subunits that are part of 70S ribosomes or polysomes). Required for efficient processing of 16S rRNA. May interact with the 5'-terminal helix region of 16S rRNA. In Moorella thermoacetica (strain ATCC 39073 / JCM 9320), this protein is Ribosome-binding factor A.